Here is an 802-residue protein sequence, read N- to C-terminus: MSAFPDSMDQKFHNMTVNECFQSRSTVLQGQPFGGIPTVLVLNIILWVFVVLLYSFLRKAAWDYGRLALLIHNDSLTSLIYGEQSEKSSPSEVSLEAERRDRGFSSWFFNSLTMRDRDLINKCGDDARIYITFQYHLIIFVLILCIPSLGIILPVNYIGTVLDWNSHFGRTTIVNVSTESKFLWLHSLFAFLYFLINLAFMGHHCLGFVPKKSLHFTRTLMITYVPTEIQDPEIISKHFHEAYPGCVVTRVHFCYDVRNLIDLDDQRRHAMRGRLYYTAKAKKTGKVMIKTHPCSRLCFCKCWTCFKEVDAEQYYSELEEQLTDEFNAELNRVQLKRLDLIFVTFQDARTVRRIYDDYKYIHCGRHPKQSSVTTIVKNYHWRVAHAPHPKDIIWKHLSIRRFSWWTRFIAINTFLFFLFFFLTTPAIIINTIDIYNVTRPIEKLQSPIVTQFFPSVLLWAFTVTMPLLVYLSAFLEAHWTRSSQNLIIVHKCYIFLVFMVVILPSMGLTSLHVFLRWLFDIYYLEHATIRFQCVFLPDNGAFFINYVITAALLGTGMELMRLGSLCTYCTRLFLSKSEPERVHIRKNQATDFQFGREYAWMLNVFSVVMAYSITCPIIVPFGLLYLCMKHITDRYNMYYSYAPTKLNAQIHMAAVYQAIFAPLLGLFWMLFFSILRVGSLHSITLFSMSSLIISVVIAFSGVFLGKLRIAQRYEQPEEETETVFDVEPSSTTSTPTSLLYVATVLQEPELNLTPASSPARHTYGTINSQPEEGEEESGLRGFARELDSAQFQEGLEMEGQSH.

Residues Met1–Gly35 are Extracellular-facing. The helical transmembrane segment at Ile36–Ala60 threads the bilayer. The Cytoplasmic portion of the chain corresponds to Ala61–Gly124. Phosphoserine is present on residues Ser75 and Ser78. Residues Asp125–Tyr157 form a helical membrane-spanning segment. Residues Ile158–Ser180 are Extracellular-facing. The helical transmembrane segment at Lys181–Cys205 threads the bilayer. At Leu206–Arg401 the chain is on the cytoplasmic side. A helical transmembrane segment spans residues Phe402–Thr431. At Ile432 to Ser446 the chain is on the extracellular side. Residues Pro447–Glu476 form a helical membrane-spanning segment. Residues Ala477–Thr480 lie on the Cytoplasmic side of the membrane. The helical transmembrane segment at Arg481–Trp517 threads the bilayer. Residues Leu518 to Gly540 are Extracellular-facing. A helical transmembrane segment spans residues Ala541 to Phe573. The Cytoplasmic segment spans residues Leu574–Gln593. The chain crosses the membrane as a helical span at residues Phe594–Ser612. Residues Ile613–Cys615 lie on the Extracellular side of the membrane. The chain crosses the membrane as a helical span at residues Pro616–Ser640. Residues Tyr641–Asn647 are Cytoplasmic-facing. Residues Ala648–Arg676 traverse the membrane as a helical segment. Residues Val677 to His681 are Extracellular-facing. Residues Ser682–Val702 form a helical membrane-spanning segment. Over Phe703 to His802 the chain is Cytoplasmic. The interval Thr753–Glu785 is disordered.

This sequence belongs to the CSC1 (TC 1.A.17) family. Monomer.

It localises to the endoplasmic reticulum membrane. It is found in the cell membrane. The catalysed reaction is Ca(2+)(in) = Ca(2+)(out). Functionally, acts as an osmosensitive cation channel preferentially activated upon hypotonic stress. In contrast to TMEM63B, does not show phospholipid scramblase activity. Enriched in mitochondria-ER contact sites where it may regulate the metabolite flux and organelles' morphologies in response to osmotic changes. In particular may regulate mitochondrial motility and function in motor neuron axons. Required for the functional integrity of the kidney glomerular filtration barrier. This is Osmosensitive cation channel TMEM63C from Mus musculus (Mouse).